Here is a 160-residue protein sequence, read N- to C-terminus: Major pollen allergen Car b 1 isoform 2 (160 aa).

It belongs to the BetVI family.

The protein is Major pollen allergen Car b 1 isoform 2 of Carpinus betulus (European hornbeam).